The following is a 356-amino-acid chain: Epoxide hydrolase B (356 aa).

In terms of domain architecture, AB hydrolase-1 spans 28-129 (PLVVLLHGFP…RCAGVVGISV (102 aa)). Asp-104 acts as the Nucleophile in catalysis. The active-site Proton acceptor is the His-333.

This sequence belongs to the AB hydrolase superfamily. Epoxide hydrolase family. As to quaternary structure, homodimer.

It carries out the reaction an epoxide + H2O = an ethanediol. Functionally, could be involved in detoxification of extraneous host-cell epoxides. Catalyzes the hydrolysis of small aromatic epoxide-containing substrates such as trans-1,3-diphenylpropene oxide, trans and cis-stilbene oxide, and terpenoid epoxide. The chain is Epoxide hydrolase B from Mycobacterium tuberculosis (strain CDC 1551 / Oshkosh).